A 94-amino-acid polypeptide reads, in one-letter code: Large ribosomal subunit protein bL25 (94 aa).

The protein belongs to the bacterial ribosomal protein bL25 family. Part of the 50S ribosomal subunit; part of the 5S rRNA/L5/L18/L25 subcomplex. Contacts the 5S rRNA. Binds to the 5S rRNA independently of L5 and L18.

In terms of biological role, this is one of the proteins that binds to the 5S RNA in the ribosome where it forms part of the central protuberance. This Yersinia pestis bv. Antiqua (strain Antiqua) protein is Large ribosomal subunit protein bL25.